The following is a 313-amino-acid chain: tRNA uridine(34) hydroxylase (313 aa).

Residues 124-218 (SDPEVLLIDT…YLEEVPQEET (95 aa)) enclose the Rhodanese domain. The Cysteine persulfide intermediate role is filled by cysteine 178.

Belongs to the TrhO family.

The enzyme catalyses uridine(34) in tRNA + AH2 + O2 = 5-hydroxyuridine(34) in tRNA + A + H2O. Catalyzes oxygen-dependent 5-hydroxyuridine (ho5U) modification at position 34 in tRNAs. In Pseudomonas fluorescens (strain SBW25), this protein is tRNA uridine(34) hydroxylase.